The sequence spans 448 residues: Chromosomal replication initiator protein DnaA (448 aa).

The tract at residues 1-73 (MNAQLKQLWT…INAIKLITSK (73 aa)) is domain I, interacts with DnaA modulators. The tract at residues 73 to 109 (KKYNIEFSITSEEIFNNQQLKPKSSNDNIVVNDEMTS) is domain II. Residues 110–326 (ILNPKYTFDS…GALIRIVAYS (217 aa)) form a domain III, AAA+ region region. 4 residues coordinate ATP: glycine 154, glycine 156, lysine 157, and threonine 158. A domain IV, binds dsDNA region spans residues 327–448 (SLTNREISVD…DDLNKKITNN (122 aa)).

It belongs to the DnaA family. In terms of assembly, oligomerizes as a right-handed, spiral filament on DNA at oriC.

The protein localises to the cytoplasm. Its function is as follows. Plays an essential role in the initiation and regulation of chromosomal replication. ATP-DnaA binds to the origin of replication (oriC) to initiate formation of the DNA replication initiation complex once per cell cycle. Binds the DnaA box (a 9 base pair repeat at the origin) and separates the double-stranded (ds)DNA. Forms a right-handed helical filament on oriC DNA; dsDNA binds to the exterior of the filament while single-stranded (ss)DNA is stabiized in the filament's interior. The ATP-DnaA-oriC complex binds and stabilizes one strand of the AT-rich DNA unwinding element (DUE), permitting loading of DNA polymerase. After initiation quickly degrades to an ADP-DnaA complex that is not apt for DNA replication. Binds acidic phospholipids. The sequence is that of Chromosomal replication initiator protein DnaA from Clostridium novyi (strain NT).